The primary structure comprises 718 residues: Phenylalanine--tRNA ligase beta subunit (718 aa).

The tRNA-binding domain maps to 39 to 153 (LNEISGIKFG…IFDLESNPLK (115 aa)). Positions 386 to 460 (SKKTFLDLNY…RFYGLEKLKD (75 aa)) constitute a B5 domain. Mg(2+) is bound by residues D438, D444, and D448.

Belongs to the phenylalanyl-tRNA synthetase beta subunit family. Type 1 subfamily. As to quaternary structure, tetramer of two alpha and two beta subunits. It depends on Mg(2+) as a cofactor.

The protein resides in the cytoplasm. It catalyses the reaction tRNA(Phe) + L-phenylalanine + ATP = L-phenylalanyl-tRNA(Phe) + AMP + diphosphate + H(+). The polypeptide is Phenylalanine--tRNA ligase beta subunit (Mesomycoplasma hyopneumoniae (strain J / ATCC 25934 / NCTC 10110) (Mycoplasma hyopneumoniae)).